The following is a 236-amino-acid chain: Orotidine 5'-phosphate decarboxylase (236 aa).

Substrate-binding positions include D16, K38, 65-74, T124, R185, Q194, G214, and R215; that span reads DLKYHDIPNT. The Proton donor role is filled by K67.

This sequence belongs to the OMP decarboxylase family. Type 1 subfamily. As to quaternary structure, homodimer.

It catalyses the reaction orotidine 5'-phosphate + H(+) = UMP + CO2. The protein operates within pyrimidine metabolism; UMP biosynthesis via de novo pathway; UMP from orotate: step 2/2. In terms of biological role, catalyzes the decarboxylation of orotidine 5'-monophosphate (OMP) to uridine 5'-monophosphate (UMP). This is Orotidine 5'-phosphate decarboxylase from Hydrogenovibrio crunogenus (strain DSM 25203 / XCL-2) (Thiomicrospira crunogena).